Here is a 261-residue protein sequence, read N- to C-terminus: Short chain dehydrogenase/reductase astE (261 aa).

Positions 24, 70, 97, and 131 each coordinate NADP(+). Catalysis depends on proton donor residues Ser-150 and Tyr-164. NADP(+) is bound by residues Tyr-164, Lys-168, Val-197, and Thr-199. Lys-168 serves as the catalytic Lowers pKa of active site Tyr.

It belongs to the short-chain dehydrogenases/reductases (SDR) family.

Its pathway is secondary metabolite biosynthesis; terpenoid biosynthesis. In terms of biological role, short chain dehydrogenase/reductase; part of the gene cluster that mediates the biosynthesis of astellolides, drimane-type sesquiterpene esters that show antimicrobial, anti-inflammatory, and anti-tumor activities. The first step in astellolide biosynthesis is performed by the sesquiterpene cyclase astC that catalyzes the formation of drimanyl pyrophosphate from farnesyl pyrophosphate. Drimanyl pyrophosphate is then dephosphorylated by the sesquiterpene phosphatase astI to produce drimanyl monophosphate which is further dephosphorylated to drim-8-ene-11-ol by atsK. Drim-8-ene-11-ol is converted to confertifolin, probably by the cytochrome P450 monooxygenase astD and/or the dehydrogenase astE. The cytochrome P450 monooxygenases astB, astF and astJ then hydroxylate confertifolin at C6, C14, or C15 to form trihydroxy confertifolin. The nonribosomal peptide synthetase astA catalyzes ester bond formation between trihydroxy contifolin and benzoic acid (BA) or 4-hydroxy benzoic acid (4HBA), leading to the formation of dideacetyl astellolides A and B, respectively. Finally, the O-acetyltransferase astG converts dideacetyl astellolides A and B into deacetyl astellolides A and B. The sequence is that of Short chain dehydrogenase/reductase astE from Aspergillus oryzae (strain ATCC 42149 / RIB 40) (Yellow koji mold).